The sequence spans 186 residues: Coiled-coil domain-containing protein ORF13 (186 aa).

Coiled coils occupy residues 2-30 (GIKE…DFIK) and 63-85 (LREK…QRDK).

This is Coiled-coil domain-containing protein ORF13 from Helicobacter pylori (strain 35A).